The following is a 388-amino-acid chain: Succinate--CoA ligase [ADP-forming] subunit beta (388 aa).

Residues 9–244 (KALFAEYGLP…PSQDDAREAH (236 aa)) enclose the ATP-grasp domain. Residues lysine 46, 53-55 (GRG), glutamate 99, threonine 102, and glutamate 107 contribute to the ATP site. Residues asparagine 199 and aspartate 213 each coordinate Mg(2+). Substrate is bound by residues asparagine 264 and 321–323 (GIV).

The protein belongs to the succinate/malate CoA ligase beta subunit family. In terms of assembly, heterotetramer of two alpha and two beta subunits. It depends on Mg(2+) as a cofactor.

The enzyme catalyses succinate + ATP + CoA = succinyl-CoA + ADP + phosphate. It catalyses the reaction GTP + succinate + CoA = succinyl-CoA + GDP + phosphate. It functions in the pathway carbohydrate metabolism; tricarboxylic acid cycle; succinate from succinyl-CoA (ligase route): step 1/1. In terms of biological role, succinyl-CoA synthetase functions in the citric acid cycle (TCA), coupling the hydrolysis of succinyl-CoA to the synthesis of either ATP or GTP and thus represents the only step of substrate-level phosphorylation in the TCA. The beta subunit provides nucleotide specificity of the enzyme and binds the substrate succinate, while the binding sites for coenzyme A and phosphate are found in the alpha subunit. This is Succinate--CoA ligase [ADP-forming] subunit beta from Shewanella sediminis (strain HAW-EB3).